The sequence spans 316 residues: Transaldolase (316 aa).

The Schiff-base intermediate with substrate role is filled by Lys127.

It belongs to the transaldolase family. Type 2 subfamily.

It localises to the cytoplasm. It catalyses the reaction D-sedoheptulose 7-phosphate + D-glyceraldehyde 3-phosphate = D-erythrose 4-phosphate + beta-D-fructose 6-phosphate. It participates in carbohydrate degradation; pentose phosphate pathway; D-glyceraldehyde 3-phosphate and beta-D-fructose 6-phosphate from D-ribose 5-phosphate and D-xylulose 5-phosphate (non-oxidative stage): step 2/3. Functionally, transaldolase is important for the balance of metabolites in the pentose-phosphate pathway. This Helicobacter pylori (strain P12) protein is Transaldolase.